Here is a 284-residue protein sequence, read N- to C-terminus: RNase adapter protein RapZ (284 aa).

Residue 8–15 coordinates ATP; that stretch reads GRSGSGKS. Residue 56–59 participates in GTP binding; it reads DVRN. The tract at residues 266–284 is RNA-binding; the sequence is RSRGKNVQSRHRTLEKRKT.

Belongs to the RapZ-like family. RapZ subfamily. In terms of assembly, homotrimer.

Its function is as follows. Modulates the synthesis of GlmS, by affecting the processing and stability of the regulatory small RNA GlmZ. When glucosamine-6-phosphate (GlcN6P) concentrations are high in the cell, RapZ binds GlmZ and targets it to cleavage by RNase E. Consequently, GlmZ is inactivated and unable to activate GlmS synthesis. Under low GlcN6P concentrations, RapZ is sequestered and inactivated by an other regulatory small RNA, GlmY, preventing GlmZ degradation and leading to synthesis of GlmS. The chain is RNase adapter protein RapZ from Escherichia fergusonii (strain ATCC 35469 / DSM 13698 / CCUG 18766 / IAM 14443 / JCM 21226 / LMG 7866 / NBRC 102419 / NCTC 12128 / CDC 0568-73).